Here is a 651-residue protein sequence, read N- to C-terminus: Protein EXECUTER 2, chloroplastic (651 aa).

The N-terminal 69 residues, 1–69 (MATTQPCLIG…KAPSLSCLRN (69 aa)), are a transit peptide targeting the chloroplast. The UVR domain maps to 103–138 (ESVVSLLKSQLEDAVEKEDFEEAVKLKQAISEATVD). The segment at 330 to 359 (DATEELVGEGTEETNSSDDEEEVEEEENDS) is disordered.

It localises to the plastid. It is found in the chloroplast. Together with EX1, enables higher plants to perceive singlet oxygen as a stress signal in plastid that activates a genetically determined nuclear stress response program which triggers a programmed cell death (PCD). This transfer of singlet oxygen-induced stress-related signals from the plastid to the nucleus that triggers genetically controlled PCD pathway is unique to photosynthetic eukaryotes and operates under mild stress conditions, impeding photosystem II (PSII) without causing photooxidative damage of the plant. In Arabidopsis thaliana (Mouse-ear cress), this protein is Protein EXECUTER 2, chloroplastic.